We begin with the raw amino-acid sequence, 651 residues long: Altered inheritance of mitochondria protein 21 (651 aa).

The segment at 1-85 (MPSEVTPKVP…LQRPVRRSTT (85 aa)) is disordered. Over residues 9–19 (VPERPSRRKTS) the composition is skewed to basic and acidic residues. At T18 the chain carries Phosphothreonine. S36 carries the post-translational modification Phosphoserine. At T58 the chain carries Phosphothreonine. A Phosphoserine modification is found at S70. A Phosphothreonine modification is found at T85. S104 carries the post-translational modification Phosphoserine. A compositionally biased stretch (basic residues) spans 110–119 (NIHNVSRKKS). Disordered stretches follow at residues 110–522 (NIHN…EKIE) and 549–651 (IDTT…FHSL). Composition is skewed to polar residues over residues 133–149 (QNGQ…TNPS) and 164–178 (SAIS…SNNE). A compositionally biased stretch (basic and acidic residues) spans 179 to 213 (VTEHSDSEDLTEKQKVHAALDNEAGDRSHFEEKLI). 3 positions are modified to phosphoserine: S183, S206, and S231. Positions 243–272 (SDDKAEKFTKHPESSLEELQKHQEQQEEKI) are enriched in basic and acidic residues. Residue T277 is modified to Phosphothreonine. Phosphoserine is present on S284. A compositionally biased stretch (polar residues) spans 296–323 (EVNSQPQGPSDTETVIAATSSNVPSQIA). S324 carries the phosphoserine modification. 2 stretches are compositionally biased toward basic and acidic residues: residues 339-361 (KKDF…RVSE) and 372-383 (EESKIPKIPSER). Positions 383–396 (RPKRRAPPPVPKKP) are interaction with SH3 domain of ABP1. Polar residues-rich tracts occupy residues 414–427 (DLHN…TTAS) and 437–452 (SSIT…TSKL). Residues 471-482 (LEKKLSSPDTES) are compositionally biased toward basic and acidic residues. Positions 501-512 (RRGRGPRGRKLP) are enriched in basic residues. At T552 the chain carries Phosphothreonine. The span at 556-567 (QAERALDEKEKL) shows a compositional bias: basic and acidic residues. Residues 575-586 (PLSQLPQTNTVG) show a composition bias toward polar residues. Phosphoserine is present on residues S592, S595, S597, S599, S639, S643, S647, and S650. Over residues 594–605 (ESLSPSEAITNR) the composition is skewed to polar residues. The segment covering 639–651 (SALHSEEASFHSL) has biased composition (basic and acidic residues).

This sequence belongs to the AIM21 family. Interacts with ribosomes. Interacts with ABP1.

It localises to the cytoplasm. The protein resides in the cytoskeleton. The protein localises to the actin patch. Its function is as follows. Involved in mitochondrial migration along actin filaments. This chain is Altered inheritance of mitochondria protein 21 (AIM21), found in Saccharomyces cerevisiae (strain RM11-1a) (Baker's yeast).